Here is a 642-residue protein sequence, read N- to C-terminus: Zinc finger protein 14 (642 aa).

Residues V4–R76 form the KRAB domain. Residues H103–H125 form a C2H2-type 1 zinc finger. Residues C141 to H163 form a C2H2-type 2; degenerate zinc finger. The C2H2-type 3 zinc finger occupies Y169 to H191. The C2H2-type 4; atypical zinc-finger motif lies at Y197–H217. C2H2-type zinc fingers lie at residues Y223–H245, Y251–H273, Y279–H301, Y307–H329, Y335–H357, Y363–H385, Y391–H413, Y419–H441, Y447–H469, Y475–H497, Y503–H525, F531–H553, Y559–H581, Y587–H609, and Y615–H637.

This sequence belongs to the krueppel C2H2-type zinc-finger protein family.

Its subcellular location is the nucleus. May be involved in transcriptional regulation. This chain is Zinc finger protein 14 (ZNF14), found in Homo sapiens (Human).